The chain runs to 275 residues: MRPLQAEIIKALGVQATIDPETEVRRSVDFLKAYLKKNTFLKTYVLGISGGQDSSLAGALTEKAMQEMRAETGDDAYQFIAVRLPYGEQADEADAMAAIDFMHADVVKRVNIKPSVDAMVAAVEADGSKISDFNKGNIKARMRMIAQYAIAGNNAGAVIGTDHAAEAVTGFYTKFGDGGADLTPLYRLDKRQGAALLKVLGAPAHLYEKAPTADLEDNRPALPDEVALGVKYKDIDDYLEGKDVTDQAAETIEKWYQKTAHKRHLPITVFDNFWK.

An ATP-binding site is contributed by 47 to 54; it reads GISGGQDS. A Mg(2+)-binding site is contributed by Asp-53. Arg-141 contributes to the deamido-NAD(+) binding site. Thr-161 provides a ligand contact to ATP. Glu-166 is a binding site for Mg(2+). Positions 174 and 181 each coordinate deamido-NAD(+). Lys-190 and Thr-212 together coordinate ATP. Deamido-NAD(+) is bound at residue 261-262; it reads HK.

The protein belongs to the NAD synthetase family. In terms of assembly, homodimer.

The enzyme catalyses deamido-NAD(+) + NH4(+) + ATP = AMP + diphosphate + NAD(+) + H(+). Its pathway is cofactor biosynthesis; NAD(+) biosynthesis; NAD(+) from deamido-NAD(+) (ammonia route): step 1/1. Its function is as follows. Catalyzes the ATP-dependent amidation of deamido-NAD to form NAD. Uses ammonia as a nitrogen source. This chain is NH(3)-dependent NAD(+) synthetase, found in Lacticaseibacillus paracasei (strain ATCC 334 / BCRC 17002 / CCUG 31169 / CIP 107868 / KCTC 3260 / NRRL B-441) (Lactobacillus paracasei).